Reading from the N-terminus, the 308-residue chain is tRNA pseudouridine synthase B (308 aa).

The Nucleophile role is filled by Asp47.

The protein belongs to the pseudouridine synthase TruB family. Type 1 subfamily.

The enzyme catalyses uridine(55) in tRNA = pseudouridine(55) in tRNA. Responsible for synthesis of pseudouridine from uracil-55 in the psi GC loop of transfer RNAs. The chain is tRNA pseudouridine synthase B from Rhodospirillum rubrum (strain ATCC 11170 / ATH 1.1.1 / DSM 467 / LMG 4362 / NCIMB 8255 / S1).